A 187-amino-acid polypeptide reads, in one-letter code: MYEAIFDLEAITPLFMRGADARSPEFSSASVKGVMRWWFRALAGGYFGNNIEALKEVEEKIFGSTRNKSRVFVRAEVEDVKKGNIYRQASSWADKTIIVWSEYVDYFFFSVLDKRRNRKTKKIDIKTRFEYFDVGSKFSISLSSTDERYFRLAEASLWMTINLGGFGFRARRGAGSLKVQMLREMLL.

Belongs to the CRISPR system Cmr1 family. As to quaternary structure, part of the type III-B Cmr ribonucleoprotein (RNP) complex. This is an elongated RNP with Cmr2 and Cmr3 as the base, with Cmr4 and Cmr5 forming a helical core along the mature crRNA (39 or 45 nt in length), while the complex is capped by Cmr6 and Cmr1. The 5' end of the crRNA is bound to Cmr2 and Cmr3, while Cmr6 and a Cmr1 subunit (Cmr1-1 or Cmr1-2) cap the 3' end of the crRNA. The target RNA lies antiparallel to the crRNA, with its 5' end near Cmr1 and Cmr6 and its 3' end near Cmr2 and Cmr3; major target cleavage occurs nears the junction of Cmr1/Cmr6 and Cmr4/Cmr, with minor cleavage occurring at 6 nt intervals which coincide with the proposed spacing of Cmr4 subunits.

It is found in the cytoplasm. CRISPR (clustered regularly interspaced short palindromic repeat), is an adaptive immune system that provides protection against mobile genetic elements (viruses, transposable elements and conjugative plasmids). CRISPR clusters contain sequences complementary to antecedent mobile elements and target invading nucleic acids. CRISPR clusters are transcribed and processed into CRISPR RNA (crRNA), formerly called psiRNA (prokaryotic silencing) in this organism. Part of the Cmr ribonucleoprotein complex which has divalent cation-dependent endoribonuclease activity specific for ssRNA complementary to the crRNA (target RNA), generating 5' hydroxy- and 3' phosphate or 2'-3' cyclic phosphate termini. Cmr4 is probably the subunit that cleaves target RNA. Cmr complex does not cleave ssDNA complementary to the crRNA. Cleavage of invading RNA is guided by the crRNA; substrate cleavage occurs a fixed distance (14 nt) from the 3' end of the crRNA. In vitro reconstitution shows Cmr1-2 and Cmr5 are not absolutely necessary for target cleavage. The chain is CRISPR system Cmr subunit Cmr1-2 from Pyrococcus furiosus (strain ATCC 43587 / DSM 3638 / JCM 8422 / Vc1).